We begin with the raw amino-acid sequence, 688 residues long: Alpha-1,4-glucan:maltose-1-phosphate maltosyltransferase (688 aa).

3 residues coordinate alpha-maltose 1-phosphate: lysine 289, glutamine 349, and aspartate 384. Aspartate 420 acts as the Nucleophile in catalysis. Asparagine 421 contacts alpha-maltose 1-phosphate. Glutamate 449 serves as the catalytic Proton donor. Lysine 560 to tyrosine 561 serves as a coordination point for alpha-maltose 1-phosphate.

It belongs to the glycosyl hydrolase 13 family. GlgE subfamily. Homodimer.

The catalysed reaction is alpha-maltose 1-phosphate + [(1-&gt;4)-alpha-D-glucosyl](n) = [(1-&gt;4)-alpha-D-glucosyl](n+2) + phosphate. In terms of biological role, maltosyltransferase that uses maltose 1-phosphate (M1P) as the sugar donor to elongate linear or branched alpha-(1-&gt;4)-glucans. Is involved in a branched alpha-glucan biosynthetic pathway from trehalose, together with TreS, Mak and GlgB. The protein is Alpha-1,4-glucan:maltose-1-phosphate maltosyltransferase of Rhodospirillum rubrum (strain ATCC 11170 / ATH 1.1.1 / DSM 467 / LMG 4362 / NCIMB 8255 / S1).